The sequence spans 91 residues: MKVKAFANQVHIAPRKARLVVDLIRGKQIKEAEAILMFTSKSASPIISKLLKSAVSNAVHNFKLDENNLYVEEIFVNESLRLPRLFPRAKG.

This sequence belongs to the universal ribosomal protein uL22 family. As to quaternary structure, part of the 50S ribosomal subunit.

This protein binds specifically to 23S rRNA; its binding is stimulated by other ribosomal proteins, e.g. L4, L17, and L20. It is important during the early stages of 50S assembly. It makes multiple contacts with different domains of the 23S rRNA in the assembled 50S subunit and ribosome. In terms of biological role, the globular domain of the protein is located near the polypeptide exit tunnel on the outside of the subunit, while an extended beta-hairpin is found that lines the wall of the exit tunnel in the center of the 70S ribosome. In Loofah witches'-broom phytoplasma, this protein is Large ribosomal subunit protein uL22 (rplV).